Here is a 304-residue protein sequence, read N- to C-terminus: MQIVRALPDIAKTRTEFETYTLQWVGMEDIAVPLTLNIGGGKQQSLPAKANVYVSLDDAAEKGIHMSRLHAILNQLASQVCDKEGLDLLLRNMVASQGKISRSAKVELVFDLLLPKPSLLSNETGFQTYRIEIGGQCLSEKYDYSLKITVPYSSTCPCSAALSRQLFSDAIDNEFSTSRIDKQELLSWALTSTVATPHSQRSYAYLNLLLGNHGWPSLSSFIMQIEEAIGTPVQTMVKRTDEQEFARLNADNLMFCEDAARNVKTLLEQSSWIEDYWFKVEHQESLHAHNAVVIDQKYSKGAML.

Belongs to the GTP cyclohydrolase IV family.

It carries out the reaction GTP + H2O = 7,8-dihydroneopterin 3'-triphosphate + formate + H(+). Its pathway is cofactor biosynthesis; 7,8-dihydroneopterin triphosphate biosynthesis; 7,8-dihydroneopterin triphosphate from GTP: step 1/1. Functionally, converts GTP to 7,8-dihydroneopterin triphosphate. The sequence is that of GTP cyclohydrolase FolE2 from Hahella chejuensis (strain KCTC 2396).